We begin with the raw amino-acid sequence, 316 residues long: Probable 5-dehydro-4-deoxyglucarate dehydratase 1 (316 aa).

Belongs to the DapA family.

The enzyme catalyses 5-dehydro-4-deoxy-D-glucarate + H(+) = 2,5-dioxopentanoate + CO2 + H2O. It participates in carbohydrate acid metabolism; D-glucarate degradation; 2,5-dioxopentanoate from D-glucarate: step 2/2. In Streptomyces coelicolor (strain ATCC BAA-471 / A3(2) / M145), this protein is Probable 5-dehydro-4-deoxyglucarate dehydratase 1.